A 308-amino-acid chain; its full sequence is tRNA dimethylallyltransferase (308 aa).

Residue 9 to 16 (GPTAAGKT) participates in ATP binding. 11 to 16 (TAAGKT) lines the substrate pocket. Interaction with substrate tRNA stretches follow at residues 34–37 (DSMQ) and 158–162 (QRLLR).

It belongs to the IPP transferase family. In terms of assembly, monomer. Requires Mg(2+) as cofactor.

It catalyses the reaction adenosine(37) in tRNA + dimethylallyl diphosphate = N(6)-dimethylallyladenosine(37) in tRNA + diphosphate. Functionally, catalyzes the transfer of a dimethylallyl group onto the adenine at position 37 in tRNAs that read codons beginning with uridine, leading to the formation of N6-(dimethylallyl)adenosine (i(6)A). The chain is tRNA dimethylallyltransferase from Maricaulis maris (strain MCS10) (Caulobacter maris).